A 476-amino-acid chain; its full sequence is Carbamoyl phosphate synthase arginine-specific small chain (476 aa).

The transit peptide at 1-24 (MFSHLLKPAARSAGLLGHVNRRYL) directs the protein to the mitochondrion. The Glutamine amidotransferase type-1 domain maps to 228–415 (HVALIDCGVK…IQNVQRYKDH (188 aa)). C304 functions as the Nucleophile in the catalytic mechanism. Active-site residues include H388 and E390.

This sequence belongs to the CarA family. Heterodimer composed of 2 chains; the small (or glutamine) chain promotes the hydrolysis of glutamine to ammonia, which is used by the large (or ammonia) chain to synthesize carbamoyl phosphate.

The protein resides in the mitochondrion matrix. The enzyme catalyses hydrogencarbonate + L-glutamine + 2 ATP + H2O = carbamoyl phosphate + L-glutamate + 2 ADP + phosphate + 2 H(+). The catalysed reaction is L-glutamine + H2O = L-glutamate + NH4(+). Its pathway is amino-acid biosynthesis; L-arginine biosynthesis; carbamoyl phosphate from bicarbonate: step 1/1. Its function is as follows. Small subunit of the arginine-specific carbamoyl phosphate synthase (CPSase). CPSase catalyzes the formation of carbamoyl phosphate from the ammonia moiety of glutamine, carbonate, and phosphate donated by ATP, the first step of the arginine biosynthetic pathway. The small subunit (glutamine amidotransferase) binds and cleaves glutamine to supply the large subunit with the substrate ammonia. This is Carbamoyl phosphate synthase arginine-specific small chain (CPA1) from Phaeosphaeria nodorum (strain SN15 / ATCC MYA-4574 / FGSC 10173) (Glume blotch fungus).